The sequence spans 239 residues: Purine nucleoside phosphorylase DeoD-type (239 aa).

His-5 is a binding site for a purine D-ribonucleoside. Phosphate is bound by residues Gly-21 and Arg-25. Lys-27 bears the N6-acetyllysine mark. Phosphate-binding positions include Arg-44 and 88 to 91; that span reads RVGS. A purine D-ribonucleoside-binding positions include 180 to 182 and 204 to 205; these read EME and SD. The active-site Proton donor is Asp-205.

It belongs to the PNP/UDP phosphorylase family. As to quaternary structure, homohexamer; trimer of homodimers.

The enzyme catalyses a purine D-ribonucleoside + phosphate = a purine nucleobase + alpha-D-ribose 1-phosphate. It catalyses the reaction a purine 2'-deoxy-D-ribonucleoside + phosphate = a purine nucleobase + 2-deoxy-alpha-D-ribose 1-phosphate. Functionally, catalyzes the reversible phosphorolytic breakdown of the N-glycosidic bond in the beta-(deoxy)ribonucleoside molecules, with the formation of the corresponding free purine bases and pentose-1-phosphate. The polypeptide is Purine nucleoside phosphorylase DeoD-type (Escherichia coli O81 (strain ED1a)).